Here is a 554-residue protein sequence, read N- to C-terminus: CTP synthase (554 aa).

The segment at 1–265 is amidoligase domain; that stretch reads MTPLIFVTGG…DELVIVQFKL (265 aa). Position 13 (Ser13) interacts with CTP. Ser13 is a UTP binding site. ATP is bound by residues 14–19 and Asp71; that span reads SLGKGI. Mg(2+)-binding residues include Asp71 and Glu139. Residues 146–148, 186–191, and Lys222 each bind CTP; these read DIE and KTKPTQ. UTP contacts are provided by residues 186–191 and Lys222; that span reads KTKPTQ. One can recognise a Glutamine amidotransferase type-1 domain in the interval 292–545; that stretch reads TIAVVGKYVD…VRAAREKKAG (254 aa). An L-glutamine-binding site is contributed by Gly353. Cys380 serves as the catalytic Nucleophile; for glutamine hydrolysis. Residues 381–384, Glu404, and Arg471 each bind L-glutamine; that span reads YGMQ. Residues His518 and Glu520 contribute to the active site.

Belongs to the CTP synthase family. As to quaternary structure, homotetramer.

The enzyme catalyses UTP + L-glutamine + ATP + H2O = CTP + L-glutamate + ADP + phosphate + 2 H(+). It catalyses the reaction L-glutamine + H2O = L-glutamate + NH4(+). It carries out the reaction UTP + NH4(+) + ATP = CTP + ADP + phosphate + 2 H(+). The protein operates within pyrimidine metabolism; CTP biosynthesis via de novo pathway; CTP from UDP: step 2/2. Allosterically activated by GTP, when glutamine is the substrate; GTP has no effect on the reaction when ammonia is the substrate. The allosteric effector GTP functions by stabilizing the protein conformation that binds the tetrahedral intermediate(s) formed during glutamine hydrolysis. Inhibited by the product CTP, via allosteric rather than competitive inhibition. Functionally, catalyzes the ATP-dependent amination of UTP to CTP with either L-glutamine or ammonia as the source of nitrogen. Regulates intracellular CTP levels through interactions with the four ribonucleotide triphosphates. The polypeptide is CTP synthase (Xanthomonas oryzae pv. oryzae (strain MAFF 311018)).